Reading from the N-terminus, the 232-residue chain is uncharacterized protein (232 aa).

A compositionally biased stretch (basic and acidic residues) spans 86–95; sequence RGLPRPEFKA. Positions 86–107 are disordered; the sequence is RGLPRPEFKANGHPSMDAEADD.

This is an uncharacterized protein from Sinorhizobium fredii (strain NBRC 101917 / NGR234).